The following is a 116-amino-acid chain: Spexin (116 aa).

Residues 1-26 (MKGFKSLVVMTLTLFLVFSFMGNCNS) form the signal peptide. The propeptide occupies 27-35 (APQRLFERR). Residue Gln49 is modified to Glutamine amide. 2 propeptides span residues 50-116 (GRRF…LLNW) and 74-116 (PNSQ…LLNW). Residues 53–73 (FLSDQSRRKDLSDRPPLERRS) are compositionally biased toward basic and acidic residues. The tract at residues 53-80 (FLSDQSRRKDLSDRPPLERRSPNSQQLT) is disordered.

The protein belongs to the spexin family.

It localises to the secreted. The protein resides in the extracellular space. The protein localises to the cytoplasmic vesicle. It is found in the secretory vesicle. Its function is as follows. Plays a role as a central modulator of cardiovascular and renal function and nociception. Also plays a role in energy metabolism and storage. Inhibits adrenocortical cell proliferation with minor stimulation on corticosteroid release. Acts as a ligand for galanin receptors GALR2 and GALR3. Intracerebroventricular administration of the peptide induces an increase in arterial blood pressure, a decrease in both heart rate and renal excretion and delayed natriuresis. Intraventricular administration of the peptide induces antinociceptive activity. Also induces contraction of muscarinic-like stomach smooth muscles. Intraperitoneal administration of the peptide induces a reduction in food consumption and body weight. Inhibits long chain fatty acid uptake into adipocytes. Functionally, intracerebroventricular administration of the peptide induces a decrease in heart rate, but no change in arterial pressure, and an increase in urine flow rate. Intraventricular administration of the peptide induces antinociceptive activity. The polypeptide is Spexin (SPX) (Bos taurus (Bovine)).